The following is a 150-amino-acid chain: Transthyretin (150 aa).

Positions 1 to 20 (MASYRLLLLCLAGLVFVSEA) are cleaved as a signal peptide. Cys30 carries the post-translational modification Sulfocysteine. Lys35 provides a ligand contact to L-thyroxine. Glu62 carries the 4-carboxyglutamate modification. Glu74 serves as a coordination point for L-thyroxine. An N-linked (GlcNAc...) asparagine glycan is attached at Asn118. Ser137 provides a ligand contact to L-thyroxine.

It belongs to the transthyretin family. In terms of assembly, homotetramer. Dimer of dimers. In the homotetramer, subunits assemble around a central channel that can accommodate two ligand molecules. Interacts with RBP4. In terms of processing, sulfonation of the reactive cysteine Cys-30 enhances the stability of the native conformation of TTR, avoiding misassembly of the protein leading to amyloid formation. Detected in plasma and cerebrospinal fluid (at protein level). Highly expressed in the choroid plexus. Detected in liver.

It is found in the secreted. Thyroid hormone-binding protein. Probably transports thyroxine from the bloodstream to the brain. This Sus scrofa (Pig) protein is Transthyretin (TTR).